The primary structure comprises 191 residues: Nascent polypeptide-associated complex subunit alpha (191 aa).

One can recognise an NAC-A/B domain in the interval serine 24–alanine 89. Positions glutamine 126–glycine 149 are disordered. Low complexity predominate over residues aspartate 127–serine 139. Residues valine 153–glutamine 191 form the UBA domain.

The protein belongs to the NAC-alpha family. In terms of assembly, part of the nascent polypeptide-associated complex (NAC), consisting of EGD2 and EGD1. NAC associates with ribosomes via EGD1.

Its subcellular location is the cytoplasm. It localises to the nucleus. Component of the nascent polypeptide-associated complex (NAC), a dynamic component of the ribosomal exit tunnel, protecting the emerging polypeptides from interaction with other cytoplasmic proteins to ensure appropriate nascent protein targeting. The NAC complex also promotes mitochondrial protein import by enhancing productive ribosome interactions with the outer mitochondrial membrane and blocks the inappropriate interaction of ribosomes translating non-secretory nascent polypeptides with translocation sites in the membrane of the endoplasmic reticulum. EGD2 may also be involved in transcription regulation. The chain is Nascent polypeptide-associated complex subunit alpha (EGD2) from Cryptococcus neoformans var. neoformans serotype D (strain B-3501A) (Filobasidiella neoformans).